The chain runs to 120 residues: Fluoride-specific ion channel FluC 1 (120 aa).

Transmembrane regions (helical) follow at residues 3-23 (ALLT…LNCA) and 42-62 (LGCL…VAAL). Na(+) contacts are provided by G69 and T72. A helical membrane pass occupies residues 99–119 (ANLAAGVGAAVLGMAAVGWFL).

It belongs to the fluoride channel Fluc/FEX (TC 1.A.43) family.

It is found in the cell membrane. It carries out the reaction fluoride(in) = fluoride(out). Its activity is regulated as follows. Na(+) is not transported, but it plays an essential structural role and its presence is essential for fluoride channel function. Functionally, fluoride-specific ion channel. Important for reducing fluoride concentration in the cell, thus reducing its toxicity. The chain is Fluoride-specific ion channel FluC 1 from Thermobifida fusca (strain YX).